Reading from the N-terminus, the 82-residue chain is ATP synthase subunit c, chloroplastic (82 aa).

Helical transmembrane passes span 4 to 24 (IISA…AIGP) and 57 to 77 (LAFM…LLFA).

The protein belongs to the ATPase C chain family. In terms of assembly, F-type ATPases have 2 components, F(1) - the catalytic core - and F(0) - the membrane proton channel. F(1) has five subunits: alpha(3), beta(3), gamma(1), delta(1), epsilon(1). F(0) has four main subunits: a(1), b(1), b'(1) and c(10-14). The alpha and beta chains form an alternating ring which encloses part of the gamma chain. F(1) is attached to F(0) by a central stalk formed by the gamma and epsilon chains, while a peripheral stalk is formed by the delta, b and b' chains.

It is found in the plastid. The protein localises to the chloroplast thylakoid membrane. Functionally, f(1)F(0) ATP synthase produces ATP from ADP in the presence of a proton or sodium gradient. F-type ATPases consist of two structural domains, F(1) containing the extramembraneous catalytic core and F(0) containing the membrane proton channel, linked together by a central stalk and a peripheral stalk. During catalysis, ATP synthesis in the catalytic domain of F(1) is coupled via a rotary mechanism of the central stalk subunits to proton translocation. In terms of biological role, key component of the F(0) channel; it plays a direct role in translocation across the membrane. A homomeric c-ring of between 10-14 subunits forms the central stalk rotor element with the F(1) delta and epsilon subunits. The protein is ATP synthase subunit c, chloroplastic of Trieres chinensis (Marine centric diatom).